The primary structure comprises 142 residues: Transcription antitermination protein NusB (142 aa).

This sequence belongs to the NusB family.

Involved in transcription antitermination. Required for transcription of ribosomal RNA (rRNA) genes. Binds specifically to the boxA antiterminator sequence of the ribosomal RNA (rrn) operons. The chain is Transcription antitermination protein NusB from Thermotoga petrophila (strain ATCC BAA-488 / DSM 13995 / JCM 10881 / RKU-1).